The following is a 259-amino-acid chain: Protein BEAN1 (259 aa).

Residues 36 to 56 traverse the membrane as a helical segment; that stretch reads VLVASAVIGVVIILSCITIIV. The segment covering 71-89 has biased composition (basic residues); that stretch reads RHRHHRHHHHHHHHRRRRH. Disordered regions lie at residues 71-91 and 152-259; these read RHRHHRHHHHHHHHRRRRHRE and VGPG…ERIV. Positions 171-187 are enriched in polar residues; the sequence is LTDSCPTLDGTSDSGSG. Residues 221–230 show a composition bias toward low complexity; sequence GAGPPSGLLP.

Interacts with NEDD4.

The protein localises to the membrane. This chain is Protein BEAN1 (BEAN1), found in Homo sapiens (Human).